Here is a 136-residue protein sequence, read N- to C-terminus: ATP synthase epsilon chain (136 aa).

Positions 106 to 136 (MEGQPSSPEKLKAQQQLNEARARLQASKTAD) are disordered.

The protein belongs to the ATPase epsilon chain family. In terms of assembly, F-type ATPases have 2 components, CF(1) - the catalytic core - and CF(0) - the membrane proton channel. CF(1) has five subunits: alpha(3), beta(3), gamma(1), delta(1), epsilon(1). CF(0) has three main subunits: a, b and c.

It localises to the cellular thylakoid membrane. Its function is as follows. Produces ATP from ADP in the presence of a proton gradient across the membrane. This chain is ATP synthase epsilon chain, found in Synechococcus sp. (strain CC9605).